Reading from the N-terminus, the 60-residue chain is UPF0434 protein KPN78578_09190 (60 aa).

This sequence belongs to the UPF0434 family.

The protein is UPF0434 protein KPN78578_09190 of Klebsiella pneumoniae subsp. pneumoniae (strain ATCC 700721 / MGH 78578).